Consider the following 717-residue polypeptide: Mitotic spindle assembly checkpoint protein MAD1 (717 aa).

At methionine 1 the chain carries N-acetylmethionine. Serine 16 bears the Phosphoserine mark. Positions 46-631 form a coiled coil; the sequence is EQSMQLEERA…QTKIQEFRKV (586 aa). Lysine 61 carries the N6-acetyllysine; alternate modification. Residue lysine 61 forms a Glycyl lysine isopeptide (Lys-Gly) (interchain with G-Cter in SUMO2); alternate linkage. The Nuclear localization signal motif lies at 79–82; that stretch reads KRAR. A phosphoserine mark is found at serine 214 and serine 428. The necessary for interaction with NEK2 stretch occupies residues 380 to 532; sequence LLEERKKREI…EMQMERLTLQ (153 aa). Residues 540–551 are necessary for interaction with MAD2L1; sequence TKVLHMSLNPAS.

The protein belongs to the MAD1 family. In terms of assembly, homodimer. Dimerizes via its N- and C- terminal regions. Heterodimerizes with MAD2L1 in order to form a tetrameric MAD1L1-MAD2L1 core complex. Interacts with the closed conformation form of MAD2L1 (C-MAD2) and open conformation form of MAD2L1 (O-MAD2). It is unclear whether MAD1L1 dimerization promotes the conversion of closed to open conformation of MAD2L1. Formation of a heterotetrameric core complex containing two molecules each of MAD1L1 and of MAD2L1 promotes binding of another molecule of MAD2L1 to each MAD2L1, resulting in a heterohexamer. Perturbation of the original MAD1L1-MAD2L1 structure by the spindle checkpoint may decrease MAD2L1 affinity for MAD1L1. CDC20 can compete with MAD1L1 for MAD2L1 binding, until the attachment and/or tension dampen the checkpoint signal, preventing further release of MAD2L1 on to CDC20. Also able to interact with the BUB1/BUB3 complex. Interacts with NEK2. Interacts with TTK. Interacts with TPR; the interactions occurs in a microtubule-independent manner. Interacts with IK. Interacts with the viral Tax protein. Interacts with PRAP1. Phosphorylated; by BUB1. Become hyperphosphorylated in late S through M phases or after mitotic spindle damage.

The protein resides in the nucleus. Its subcellular location is the chromosome. It localises to the centromere. The protein localises to the kinetochore. It is found in the nucleus envelope. The protein resides in the cytoplasm. Its subcellular location is the cytoskeleton. It localises to the microtubule organizing center. The protein localises to the centrosome. It is found in the spindle. The protein resides in the spindle pole. Its function is as follows. Component of the spindle-assembly checkpoint that prevents the onset of anaphase until all chromosomes are properly aligned at the metaphase plate. Forms a heterotetrameric complex with the closed conformation form of MAD2L1 (C-MAD2) at unattached kinetochores during prometaphase, recruits an open conformation of MAD2L1 (O-MAD2) and promotes the conversion of O-MAD2 to C-MAD2, which ensures mitotic checkpoint signaling. The chain is Mitotic spindle assembly checkpoint protein MAD1 (MAD1L1) from Cricetulus griseus (Chinese hamster).